A 215-amino-acid polypeptide reads, in one-letter code: Large ribosomal subunit protein uL3 (215 aa).

The disordered stretch occupies residues 124–164; sequence KRHGFSRGPMTHGSKNHREPGSTGAGTTPGRIYPGKRMAGR.

It belongs to the universal ribosomal protein uL3 family. As to quaternary structure, part of the 50S ribosomal subunit. Forms a cluster with proteins L14 and L19.

In terms of biological role, one of the primary rRNA binding proteins, it binds directly near the 3'-end of the 23S rRNA, where it nucleates assembly of the 50S subunit. The sequence is that of Large ribosomal subunit protein uL3 from Synechococcus sp. (strain RCC307).